The following is a 396-amino-acid chain: Elongation factor Tu (396 aa).

The region spanning 10–206 (KPHVNVGTIG…ALDASIPEPK (197 aa)) is the tr-type G domain. The segment at 19-26 (GHVDHGKT) is G1. Position 19–26 (19–26 (GHVDHGKT)) interacts with GTP. Thr26 is a Mg(2+) binding site. Positions 60–64 (GITIS) are G2. The segment at 81-84 (DCPG) is G3. GTP contacts are provided by residues 81–85 (DCPGH) and 136–139 (NKAD). The interval 136 to 139 (NKAD) is G4. The tract at residues 174 to 176 (SAL) is G5.

Belongs to the TRAFAC class translation factor GTPase superfamily. Classic translation factor GTPase family. EF-Tu/EF-1A subfamily. In terms of assembly, monomer.

It is found in the cytoplasm. It carries out the reaction GTP + H2O = GDP + phosphate + H(+). Its function is as follows. GTP hydrolase that promotes the GTP-dependent binding of aminoacyl-tRNA to the A-site of ribosomes during protein biosynthesis. The polypeptide is Elongation factor Tu (Dichelobacter nodosus (strain VCS1703A)).